The sequence spans 211 residues: Orotate phosphoribosyltransferase (211 aa).

5-phospho-alpha-D-ribose 1-diphosphate-binding positions include Arg103, Lys107, His109, and 129-137 (EDLISTGKS). Residue Ser133 participates in orotate binding.

It belongs to the purine/pyrimidine phosphoribosyltransferase family. PyrE subfamily. Homodimer. The cofactor is Mg(2+).

The catalysed reaction is orotidine 5'-phosphate + diphosphate = orotate + 5-phospho-alpha-D-ribose 1-diphosphate. Its pathway is pyrimidine metabolism; UMP biosynthesis via de novo pathway; UMP from orotate: step 1/2. Functionally, catalyzes the transfer of a ribosyl phosphate group from 5-phosphoribose 1-diphosphate to orotate, leading to the formation of orotidine monophosphate (OMP). The protein is Orotate phosphoribosyltransferase of Fusobacterium nucleatum subsp. nucleatum (strain ATCC 25586 / DSM 15643 / BCRC 10681 / CIP 101130 / JCM 8532 / KCTC 2640 / LMG 13131 / VPI 4355).